Consider the following 576-residue polypeptide: V-type ATP synthase alpha chain (576 aa).

238–245 (GPFGAGKT) is an ATP binding site.

Belongs to the ATPase alpha/beta chains family.

The catalysed reaction is ATP + H2O + 4 H(+)(in) = ADP + phosphate + 5 H(+)(out). In terms of biological role, produces ATP from ADP in the presence of a proton gradient across the membrane. The V-type alpha chain is a catalytic subunit. The chain is V-type ATP synthase alpha chain from Borrelia turicatae (strain 91E135).